The chain runs to 161 residues: Nucleoside diphosphate kinase (161 aa).

6 residues coordinate ATP: Lys-13, Phe-61, Arg-89, Thr-95, Arg-106, and Asn-116. The Pros-phosphohistidine intermediate role is filled by His-119.

Belongs to the NDK family. The cofactor is Mg(2+).

The protein resides in the cytoplasm. It catalyses the reaction a 2'-deoxyribonucleoside 5'-diphosphate + ATP = a 2'-deoxyribonucleoside 5'-triphosphate + ADP. The catalysed reaction is a ribonucleoside 5'-diphosphate + ATP = a ribonucleoside 5'-triphosphate + ADP. Functionally, major role in the synthesis of nucleoside triphosphates other than ATP. The ATP gamma phosphate is transferred to the NDP beta phosphate via a ping-pong mechanism, using a phosphorylated active-site intermediate. This chain is Nucleoside diphosphate kinase, found in Halobacterium salinarum (strain ATCC 29341 / DSM 671 / R1).